The chain runs to 323 residues: tRNA dimethylallyltransferase (323 aa).

Glycine 12–threonine 19 serves as a coordination point for ATP. Threonine 14 to threonine 19 is a substrate binding site. 2 interaction with substrate tRNA regions span residues aspartate 37–leucine 40 and glutamine 161–arginine 165.

This sequence belongs to the IPP transferase family. Monomer. It depends on Mg(2+) as a cofactor.

It carries out the reaction adenosine(37) in tRNA + dimethylallyl diphosphate = N(6)-dimethylallyladenosine(37) in tRNA + diphosphate. Functionally, catalyzes the transfer of a dimethylallyl group onto the adenine at position 37 in tRNAs that read codons beginning with uridine, leading to the formation of N6-(dimethylallyl)adenosine (i(6)A). The protein is tRNA dimethylallyltransferase of Pseudomonas fluorescens (strain SBW25).